Reading from the N-terminus, the 120-residue chain is Photosystem II extrinsic protein U (120 aa).

A signal peptide spans 1–29; it reads MKRLLSLLTGVLVMTGLLMALIFPQSAYA.

This sequence belongs to the PsbU family. PSII is composed of 1 copy each of membrane proteins PsbA, PsbB, PsbC, PsbD, PsbE, PsbF, PsbH, PsbI, PsbJ, PsbK, PsbL, PsbM, PsbT, PsbX, PsbY, Psb30/Ycf12, peripheral proteins PsbO, CyanoQ (PsbQ), PsbU, PsbV and a large number of cofactors. It forms dimeric complexes.

Its subcellular location is the cellular thylakoid membrane. One of the extrinsic, lumenal subunits of photosystem II (PSII). PSII is a light-driven water plastoquinone oxidoreductase, using light energy to abstract electrons from H(2)O, generating a proton gradient subsequently used for ATP formation. The extrinsic proteins stabilize the structure of photosystem II oxygen-evolving complex (OEC), the ion environment of oxygen evolution and protect the OEC against heat-induced inactivation. This is Photosystem II extrinsic protein U from Prochlorococcus marinus (strain MIT 9313).